The sequence spans 637 residues: Chaperone protein DnaK (637 aa).

A Phosphothreonine; by autocatalysis modification is found at T196. Disordered regions lie at residues 484–528 (KATG…EVDT) and 598–637 (TEAG…VDDK). Over residues 501–528 (SETEIEKMKKDASSHADEDKKKKEEVDT) the composition is skewed to basic and acidic residues. Residues 600–620 (AGAPGAAGAAGAAGQGQSASS) are compositionally biased toward low complexity. Residues 621-637 (GKDDEVKNADFEVVDDK) show a composition bias toward basic and acidic residues.

It belongs to the heat shock protein 70 family.

Functionally, acts as a chaperone. This Chloroherpeton thalassium (strain ATCC 35110 / GB-78) protein is Chaperone protein DnaK.